A 362-amino-acid polypeptide reads, in one-letter code: Inactive 2'-5' oligoadenylate synthetase 1C (362 aa).

This sequence belongs to the 2-5A synthase family. Expressed at highest level in brain with lesser amounts in spleen, kidney, stomach, liver, intestine, ovary, skin and testis. Not detected in lung, thymus, heart and uterus.

Its function is as follows. Does not have 2'-5'-OAS activity, but can bind double-stranded RNA. The protein is Inactive 2'-5' oligoadenylate synthetase 1C of Mus musculus (Mouse).